A 213-amino-acid polypeptide reads, in one-letter code: Probable inactive serine/threonine-protein kinase DDB_G0280559 (213 aa).

Positions 1-211 constitute a Protein kinase domain; that stretch reads MVLRYSYVFK…WNEIVNHSFF (211 aa).

Belongs to the protein kinase superfamily. Ser/Thr protein kinase family.

The polypeptide is Probable inactive serine/threonine-protein kinase DDB_G0280559 (Dictyostelium discoideum (Social amoeba)).